A 372-amino-acid polypeptide reads, in one-letter code: Chorismate synthase (372 aa).

Arginine 48 lines the NADP(+) pocket. Residues 131–133 (RSS), 243–244 (NA), glycine 288, 303–307 (KPTSS), and arginine 329 contribute to the FMN site.

Belongs to the chorismate synthase family. In terms of assembly, homotetramer. It depends on FMNH2 as a cofactor.

The catalysed reaction is 5-O-(1-carboxyvinyl)-3-phosphoshikimate = chorismate + phosphate. It functions in the pathway metabolic intermediate biosynthesis; chorismate biosynthesis; chorismate from D-erythrose 4-phosphate and phosphoenolpyruvate: step 7/7. Its function is as follows. Catalyzes the anti-1,4-elimination of the C-3 phosphate and the C-6 proR hydrogen from 5-enolpyruvylshikimate-3-phosphate (EPSP) to yield chorismate, which is the branch point compound that serves as the starting substrate for the three terminal pathways of aromatic amino acid biosynthesis. This reaction introduces a second double bond into the aromatic ring system. This Caulobacter vibrioides (strain ATCC 19089 / CIP 103742 / CB 15) (Caulobacter crescentus) protein is Chorismate synthase.